The following is a 202-amino-acid chain: Coiled-coil domain-containing protein mdt-28 (202 aa).

Acidic residues-rich tracts occupy residues 1–15 and 28–45; these read MFEE…EEQE and EDID…DDEY. Positions 1-83 are disordered; the sequence is MFEELDAEDG…NEDDEEPIEP (83 aa). Residues 159–184 are a coiled coil; sequence IEEENLDEAIERQETIIAAAREMLNS.

Interacts with mdt-6 and mdt-30. Ubiquitously expressed in tissues including epidermal, intestinal, pharyngeal and uterine, and is also expressed in vulval muscle cells and gut granules.

It localises to the nucleus. It is found in the cytoplasm. Its function is as follows. Plays a role in normal growth and development. The protein is Coiled-coil domain-containing protein mdt-28 of Caenorhabditis elegans.